Consider the following 51-residue polypeptide: uncharacterized protein (51 aa).

Residues 1-42 (MKMKTNKYMNMVRPAPPRRADPEGVRDPSTMGGGPNPFLRRS) are disordered.

The protein resides in the mitochondrion. This is an uncharacterized protein from Saccharomyces cerevisiae (strain ATCC 204508 / S288c) (Baker's yeast).